The chain runs to 435 residues: Serine--tRNA ligase (435 aa).

The disordered stretch occupies residues 41–70 (QVKTEELQAQRNSRSKSIGQAKAKGDHEEA). A compositionally biased stretch (polar residues) spans 49 to 58 (AQRNSRSKSI). 242–244 (TAE) is a binding site for L-serine. 273 to 275 (RSE) is an ATP binding site. Glutamate 296 is an L-serine binding site. 360–363 (EISS) lines the ATP pocket. Serine 396 lines the L-serine pocket.

The protein belongs to the class-II aminoacyl-tRNA synthetase family. Type-1 seryl-tRNA synthetase subfamily. As to quaternary structure, homodimer. The tRNA molecule binds across the dimer.

It localises to the cytoplasm. The enzyme catalyses tRNA(Ser) + L-serine + ATP = L-seryl-tRNA(Ser) + AMP + diphosphate + H(+). The catalysed reaction is tRNA(Sec) + L-serine + ATP = L-seryl-tRNA(Sec) + AMP + diphosphate + H(+). It functions in the pathway aminoacyl-tRNA biosynthesis; selenocysteinyl-tRNA(Sec) biosynthesis; L-seryl-tRNA(Sec) from L-serine and tRNA(Sec): step 1/1. Catalyzes the attachment of serine to tRNA(Ser). Is also able to aminoacylate tRNA(Sec) with serine, to form the misacylated tRNA L-seryl-tRNA(Sec), which will be further converted into selenocysteinyl-tRNA(Sec). In Aliivibrio fischeri (strain MJ11) (Vibrio fischeri), this protein is Serine--tRNA ligase.